A 106-amino-acid polypeptide reads, in one-letter code: UPF0145 protein (106 aa).

It belongs to the UPF0145 family.

The polypeptide is UPF0145 protein (Listeria grayi (Listeria murrayi)).